We begin with the raw amino-acid sequence, 166 residues long: MKLTEKETEILEILDENSRADLETIAKMAGIPVNEVKTIIDKLEKEKVIIDYSAMIDWRKVDGHEGVTAMIDVKVTPKRGVGFDEVAERIYRFQEVESVYLMSGVYDLSVVIRGNSMSDVARFVSDKLSTLDSVVSTTTHFILKKYKHDGKVFETGDDDKRIVVSP.

The HTH asnC-type domain maps to 3 to 65 (LTEKETEILE…IDWRKVDGHE (63 aa)). The segment at residues 22–41 (LETIAKMAGIPVNEVKTIID) is a DNA-binding region (H-T-H motif).

This is an uncharacterized protein from Bacillus subtilis (strain 168).